The following is a 576-amino-acid chain: G protein-coupled receptor kinase 6 (576 aa).

The segment at M1–T185 is N-terminal. The RGS domain maps to Y53–L171. Positions F186–F448 constitute a Protein kinase domain. ATP-binding positions include L192–V200, K215, and T264–D270. The active-site Proton acceptor is D311. Residue E315 to L318 coordinates ATP. The AGC-kinase C-terminal domain occupies K449 to E514. S484 carries the post-translational modification Phosphoserine; by autocatalysis. At T485 the chain carries Phosphothreonine; by autocatalysis. S-palmitoyl cysteine attachment occurs at residues C561, C562, and C565. Residues S566 and S568 each carry the phosphoserine modification.

Belongs to the protein kinase superfamily. AGC Ser/Thr protein kinase family. GPRK subfamily. Interacts with GIT1. In terms of tissue distribution, widely expressed. Detectable in all brain areas examined.

It is found in the membrane. It carries out the reaction [G-protein-coupled receptor] + ATP = [G-protein-coupled receptor]-phosphate + ADP + H(+). Functionally, specifically phosphorylates the activated forms of G protein-coupled receptors. Such receptor phosphorylation initiates beta-arrestin-mediated receptor desensitization, internalization, and signaling events leading to their desensitization. Seems to be involved in the desensitization of D2-like dopamine receptors in striatum and chemokine receptor CXCR4 which is critical for CXCL12-induced cell chemotaxis. Phosphorylates rhodopsin (RHO) (in vitro) and a non G-protein-coupled receptor: LRP6 during Wnt signaling (in vitro). This Rattus norvegicus (Rat) protein is G protein-coupled receptor kinase 6 (Grk6).